The chain runs to 485 residues: MEQTCDDIDEMFSNLLGEMDMLTQSLGVETVQTPSPKVTNEEFSFTVGFKDLNESLNALEDKDLDALMADLVADINEVEQRTLQAQKTSGNQQSVVTQPSTGTNNDFCSKLSPCATITGQFKNDLPPPPPAPDLDLPPPPPPPPPEPLSQEEQEARAKADKIKLALEKLKEAKIKKLVVKVHMYDNSTKSLMVDERQVTRDVLDNLFEKTHCDCSVDWCLYEVYPELQIERFFEDHENVVEVLSDWTRDSENKVLFLEKKEKYALFKNPQNFYLANKGKNESKEMNDKSKEALLEESFCGASVIVPELEGALYLKEDGKKSWKRRYFLLRASGIYYVPKGKTKTSRDLMCFIQFENMNVYYGSQHKVKYKAPTDHCFVLKHPQIQKESQYIKYLCCDDRATLHQWVTGIRIAKYGKTLYDNYKCAVKKAGLSSQWANQGTLEPAAPTGSLSAGAVQANGQIPRVVLPSSAEVAETQKKVDPAIRA.

Polar residues predominate over residues 84-107; it reads QAQKTSGNQQSVVTQPSTGTNNDF. The tract at residues 84-157 is disordered; it reads QAQKTSGNQQ…LSQEEQEARA (74 aa). Pro residues predominate over residues 125–147; the sequence is LPPPPPAPDLDLPPPPPPPPPEP. The 88-residue stretch at 175 to 262 folds into the Ras-associating domain; sequence KKLVVKVHMY…KVLFLEKKEK (88 aa). Residues 305-414 form the PH domain; the sequence is VPELEGALYL…WVTGIRIAKY (110 aa).

It belongs to the MRL family.

It localises to the cell membrane. Its subcellular location is the cytoplasm. It is found in the cytoskeleton. Functionally, appears to function in the signal transduction from Ras activation to actin cytoskeletal remodeling. This Gallus gallus (Chicken) protein is Amyloid beta A4 precursor protein-binding family B member 1-interacting protein (APBB1IP).